The sequence spans 353 residues: 26S proteasome non-ATPase regulatory subunit 8 (353 aa).

Positions 1–25 (MFIKGRAAKTPRGEPRRSSRGGRKL) are disordered. In terms of domain architecture, PCI spans 165–334 (PSFERYMAQL…QQKPEDSTIP (170 aa)). K300 is covalently cross-linked (Glycyl lysine isopeptide (Lys-Gly) (interchain with G-Cter in SUMO2)).

It belongs to the proteasome subunit S14 family. As to quaternary structure, component of the 19S proteasome regulatory particle complex. The 26S proteasome consists of a 20S core particle (CP) and two 19S regulatory subunits (RP). The regulatory particle is made of a lid composed of 9 subunits including PSMD8, a base containing 6 ATPases and few additional components. Interacts with DDI2. Interacts with TASOR. Expressed in the Sertoli cells of the testis.

Functionally, component of the 26S proteasome, a multiprotein complex involved in the ATP-dependent degradation of ubiquitinated proteins. This complex plays a key role in the maintenance of protein homeostasis by removing misfolded or damaged proteins, which could impair cellular functions, and by removing proteins whose functions are no longer required. Therefore, the proteasome participates in numerous cellular processes, including cell cycle progression, apoptosis, or DNA damage repair. This Mus musculus (Mouse) protein is 26S proteasome non-ATPase regulatory subunit 8 (Psmd8).